The following is a 314-amino-acid chain: CBASS oligonucleotide cyclase CdnC (314 aa).

Residue lysine 60 coordinates ATP. Mg(2+)-binding residues include aspartate 73 and aspartate 75. ATP-binding positions include aspartate 75, lysine 186, 197-199 (KSF), and asparagine 263.

This sequence belongs to the CD-NTase family. C01 subfamily. In terms of assembly, forms complexes with Cap7 with 1:1 and 2:2 stoichimetry, and a 1:1:6 CdnC:Cap7:Cap6 complex. Mg(2+) serves as cofactor.

Functionally, cyclic nucleotide synthase (second messenger synthase) of a CBASS antivirus system. CBASS (cyclic oligonucleotide-based antiphage signaling system) provides immunity against bacteriophage. The CD-NTase protein synthesizes cyclic nucleotides in response to infection; these serve as specific second messenger signals. The signals activate a diverse range of effectors, leading to bacterial cell death and thus abortive phage infection. A type III CBASS system. Expression of this CBASS system (Cap18-Cap6-Cap7-CdnC-CapW-Cap17) in a susceptible E.coli (strain MG1655) confers resistance to bacteriophage P1. Probable cyclic nucleotide synthase that upon activation catalyzes the synthesis of a cyclic nucleotide. A cyclase activity for this enzyme was not identified in. This Escherichia coli (strain KTE188) protein is CBASS oligonucleotide cyclase CdnC.